We begin with the raw amino-acid sequence, 267 residues long: uncharacterized protein (267 aa).

Residues 30–52 traverse the membrane as a helical segment; that stretch reads FMRIFLLFLFFVLFTFGVEGYVI.

Its subcellular location is the membrane. This is an uncharacterized protein from Aquifex aeolicus (strain VF5).